A 505-amino-acid chain; its full sequence is MAHHRGHRHILLYVSLALSLGLALAEDATDPSDDTGSFDDVEAVSEEADLDPYSMSQELNKRPNVDPYSYLPSVGKRAFDHYGFTGGLGKRKIDHFGFVGGLGKRQIDPLGFSGGIGKRYDSFAYSAGLGKRGMDSLAFSGGLGKRGMDSLAFSGGLGKRGMDSLAFSGGLGKRGMDSLAFSGGLGKRGMDSLAFSGGLGKRGMDSLAFSGGLGKRGMDSFTFAPGLGKRGMDSLAFAGGLGKRMDGFAFAPGLGKRMDSFAFAPGLGKRGMDSLAFAGGLGKRMDSFAFAPGLGKRMDSFAFAPGLGKRGLDRYGFVGGLGKRGMDHFAFTGGLGKRDSGEASGDLEEGKRGLDAYSFTGALGKRGLDRYGFVGGLGKRGMDDFAFSPGLGKKRMDSFMFGSRLGKRGMDRFSFSGHLGKRKMDQFSFGPGLGKRGFDHYGFTGGIGKRGFDHYGFTGGIGKRQLDPMLFSGRLGKRSSSEQEEEDVRQVEKRSTTEEQSSKSL.

The signal sequence occupies residues 1-25 (MAHHRGHRHILLYVSLALSLGLALA). Residues 26–62 (EDATDPSDDTGSFDDVEAVSEEADLDPYSMSQELNKR) constitute a propeptide that is removed on maturation. A Valine amide modification is found at valine 74. Leucine amide occurs at positions 88 and 102. Glutamine 106 carries the post-translational modification Pyrrolidone carboxylic acid. At isoleucine 116 the chain carries Isoleucine amide. Residues leucine 129, leucine 143, leucine 157, leucine 171, leucine 185, leucine 199, leucine 213, leucine 227, leucine 241, leucine 254, leucine 267, leucine 281, leucine 294, leucine 307, leucine 321, and leucine 335 each carry the leucine amide modification. Glutamate 349 carries the glutamic acid 1-amide modification. Leucine amide is present on residues leucine 363, leucine 377, leucine 391, leucine 405, leucine 419, and leucine 433. 2 positions are modified to isoleucine amide: isoleucine 447 and isoleucine 461. Glutamine 465 is modified (pyrrolidone carboxylic acid). Positions 472 to 505 (SGRLGKRSSSEQEEEDVRQVEKRSTTEEQSSKSL) are disordered. At leucine 475 the chain carries Leucine amide. Basic and acidic residues predominate over residues 488 to 505 (VRQVEKRSTTEEQSSKSL). The propeptide occupies 495–505 (STTEEQSSKSL).

Cholinergic motor neuron B15 innervating buccal muscles in Aplysia.

Its subcellular location is the secreted. Modulatory neuropeptide, acting presynaptically on nerve terminals to inhibit acetylcholine release. In Aplysia californica (California sea hare), this protein is Buccalin.